We begin with the raw amino-acid sequence, 514 residues long: Mitochondrial-processing peptidase subunit alpha (514 aa).

The transit peptide at 1 to 55 directs the protein to the mitochondrion; it reads MLLRKSIPYIKICRDISASVRNNKEIAQKLPLSVPLPMENNSKSIEKGCPPMGRN.

The protein belongs to the peptidase M16 family. Heterodimer of mppa-1 (alpha) and mppb-1 (beta) subunits, forming the mitochondrial processing protease (MPP) in which mppa-1 is involved in substrate recognition and binding and mppb-1 is the catalytic subunit.

The protein localises to the mitochondrion matrix. Substrate recognition and binding subunit of the essential mitochondrial processing protease (MPP), which cleaves the mitochondrial sequence off newly imported precursors proteins. This Caenorhabditis elegans protein is Mitochondrial-processing peptidase subunit alpha.